The chain runs to 44 residues: MRNIKTYLSVAPVLATLWFGSLAGLLIEINRLFPDALAFPFFSF.

Residues 7–27 traverse the membrane as a helical segment; the sequence is YLSVAPVLATLWFGSLAGLLI.

It belongs to the PsaJ family.

The protein localises to the plastid. It localises to the chloroplast thylakoid membrane. Its function is as follows. May help in the organization of the PsaE and PsaF subunits. The protein is Photosystem I reaction center subunit IX of Illicium oligandrum (Star anise).